A 161-amino-acid polypeptide reads, in one-letter code: uncharacterized protein (161 aa).

A signal peptide spans 1-27; that stretch reads MKKIGLLFMLCLAALFTIGFPAQQADA.

It is found in the secreted. This is an uncharacterized protein from Bacillus subtilis (strain 168).